Reading from the N-terminus, the 547-residue chain is CTP synthase (547 aa).

The interval 1–265 is amidoligase domain; sequence MARYIFITGG…DQAVLDAFDI (265 aa). Ser13 is a CTP binding site. Ser13 serves as a coordination point for UTP. ATP is bound by residues 14 to 19 and Asp71; that span reads SLGKGL. Mg(2+) contacts are provided by Asp71 and Glu139. CTP contacts are provided by residues 146-148, 186-191, and Lys222; these read DIE and KTKPTQ. UTP contacts are provided by residues 186–191 and Lys222; that span reads KTKPTQ. Residues 291-546 form the Glutamine amidotransferase type-1 domain; the sequence is KVAIVGKYTQ…IRAAKENSRL (256 aa). Position 353 (Gly353) interacts with L-glutamine. Catalysis depends on Cys380, which acts as the Nucleophile; for glutamine hydrolysis. Residues 381–384, Glu404, and Arg474 each bind L-glutamine; that span reads LGMQ. Residues His519 and Glu521 contribute to the active site.

The protein belongs to the CTP synthase family. As to quaternary structure, homotetramer.

The enzyme catalyses UTP + L-glutamine + ATP + H2O = CTP + L-glutamate + ADP + phosphate + 2 H(+). It carries out the reaction L-glutamine + H2O = L-glutamate + NH4(+). It catalyses the reaction UTP + NH4(+) + ATP = CTP + ADP + phosphate + 2 H(+). Its pathway is pyrimidine metabolism; CTP biosynthesis via de novo pathway; CTP from UDP: step 2/2. Allosterically activated by GTP, when glutamine is the substrate; GTP has no effect on the reaction when ammonia is the substrate. The allosteric effector GTP functions by stabilizing the protein conformation that binds the tetrahedral intermediate(s) formed during glutamine hydrolysis. Inhibited by the product CTP, via allosteric rather than competitive inhibition. Functionally, catalyzes the ATP-dependent amination of UTP to CTP with either L-glutamine or ammonia as the source of nitrogen. Regulates intracellular CTP levels through interactions with the four ribonucleotide triphosphates. This Roseobacter denitrificans (strain ATCC 33942 / OCh 114) (Erythrobacter sp. (strain OCh 114)) protein is CTP synthase.